Reading from the N-terminus, the 518-residue chain is Gypsy retrotransposon integrase-like protein 1 (518 aa).

Residues 130–292 (QQHLPMVGNP…TPYFQMFNRN (163 aa)) enclose the Integrase catalytic domain. Ser-498 bears the Phosphoserine mark.

This is Gypsy retrotransposon integrase-like protein 1 (Gin1) from Mus musculus (Mouse).